Consider the following 131-residue polypeptide: Small ribosomal subunit protein uS8 (131 aa).

It belongs to the universal ribosomal protein uS8 family. As to quaternary structure, part of the 30S ribosomal subunit. Contacts proteins S5 and S12.

Functionally, one of the primary rRNA binding proteins, it binds directly to 16S rRNA central domain where it helps coordinate assembly of the platform of the 30S subunit. In Neorickettsia sennetsu (strain ATCC VR-367 / Miyayama) (Ehrlichia sennetsu), this protein is Small ribosomal subunit protein uS8.